A 428-amino-acid polypeptide reads, in one-letter code: MSVKWEKLEGNEGVLTVEVDAEQVNKGLDAAFKKVVKNVSLPGFRKGKVPRVLFEKRFGVEALYQDALDILLPEAYAKAVEEAGIEPVSMPEIDIEQMEKGKSLIFKAKVTVKPEVKLGQYKGLEVEKIDTTVTDEDVENKLKRLQENYAELVVKEEGTVENGDTAVIDFEGFVDGEPFEGGKAENYSLEIGSGTFIPGFEDQLVGMKAGEEKEIQVTFPEEYHAEQLAGKPATFKVKVHEVKAKQLPALDDEFAKDVDEEVETLDELKSKIRTRLEEAKKNEAEAAVRNAVVEKAAANAEIDIPAVMVQNETDRMLREFDQRLQMQGMNLQLYYQFSGQDEAALREQMKEDAEKRVRAALTLEAIAKAENIDVTDEEVNEELEKMAASYNLSVDKLKELIGNLDGVKEDLKWRKTVDFLVEHSTVAA.

In terms of domain architecture, PPIase FKBP-type spans glycine 163–proline 248.

It belongs to the FKBP-type PPIase family. Tig subfamily.

The protein resides in the cytoplasm. It carries out the reaction [protein]-peptidylproline (omega=180) = [protein]-peptidylproline (omega=0). Involved in protein export. Acts as a chaperone by maintaining the newly synthesized protein in an open conformation. Functions as a peptidyl-prolyl cis-trans isomerase. The protein is Trigger factor of Geobacillus thermodenitrificans (strain NG80-2).